Consider the following 225-residue polypeptide: MSRIGQVCEAFRENHWEPATIISENGSLSVTVRYEDGETEELISNLVRNSELGHPEVKKEETTQQPEKGEGMAEPKIEGTCLDHFRWYNTITEKRPDNSKLFPVVSALMAVQYDKEGTYGSSWVGKGEHRGIMPNIDRKYDRLDTMTANEIEGKAKTLAQLESSFDSMNSNEKEALHESKIDAVADLANYCLLYMTFIKDNFPKMYNAWFEKNVPQYLRDKFPRL.

Positions 48–73 are disordered; sequence RNSELGHPEVKKEETTQQPEKGEGMA. Over residues 51–73 the composition is skewed to basic and acidic residues; sequence ELGHPEVKKEETTQQPEKGEGMA.

Functionally, essential for DNA synthesis. The sequence is that of Gene 30 protein (30) from Bacillus phage SP01 (Bacteriophage SP01).